The primary structure comprises 194 residues: uncharacterized protein (194 aa).

A disordered region spans residues 62–93 (GGAGRRTSKAQRVHPQPSHQRQPPPPQHPGPY).

As to expression, expressed most abundantly in the brain at protein level. Present in cortex, cerebellum and midbrain. Found in neurons. Elevated expressions detected in Alzheimer brain samples. Also expressed in testis.

Its subcellular location is the cytoplasm. This is an uncharacterized protein from Homo sapiens (Human).